Consider the following 351-residue polypeptide: Photosystem II D2 protein (351 aa).

Residues 39–59 (TAYLALGGWFTGTTFVTSWYT) form a helical membrane-spanning segment. Chlorophyll a is bound at residue His-116. A helical membrane pass occupies residues 123 to 139 (GFMLRQFEIARLVGIRP). The pheophytin a site is built by Gln-128 and Asn-141. Residues 151 to 164 (VFLACFLIYPLGQH) form a helical membrane-spanning segment. His-196 provides a ligand contact to chlorophyll a. Residues 206-226 (GALLCGIHGATVQNTLFEDGA) traverse the membrane as a helical segment. A plastoquinone contacts are provided by His-213 and Phe-260. Fe cation is bound at residue His-213. His-267 lines the Fe cation pocket. Residues 277-293 (GMWTPSVGIVGLAVNLR) form a helical membrane-spanning segment.

Belongs to the reaction center PufL/M/PsbA/D family. PSII is composed of 1 copy each of membrane proteins PsbA, PsbB, PsbC, PsbD, PsbE, PsbF, PsbH, PsbI, PsbJ, PsbK, PsbL, PsbM, PsbT, PsbX, PsbY, Psb30/Ycf12, peripheral proteins PsbO, CyanoQ (PsbQ), PsbU, PsbV and a large number of cofactors. It forms dimeric complexes. It depends on The D1/D2 heterodimer binds P680, chlorophylls that are the primary electron donor of PSII, and subsequent electron acceptors. It shares a non-heme iron and each subunit binds pheophytin, quinone, additional chlorophylls, carotenoids and lipids. There is also a Cl(-1) ion associated with D1 and D2, which is required for oxygen evolution. The PSII complex binds additional chlorophylls, carotenoids and specific lipids. as a cofactor.

It is found in the cellular thylakoid membrane. The catalysed reaction is 2 a plastoquinone + 4 hnu + 2 H2O = 2 a plastoquinol + O2. Its function is as follows. Photosystem II (PSII) is a light-driven water:plastoquinone oxidoreductase that uses light energy to abstract electrons from H(2)O, generating O(2) and a proton gradient subsequently used for ATP formation. It consists of a core antenna complex that captures photons, and an electron transfer chain that converts photonic excitation into a charge separation. The D1/D2 (PsbA/PsbD) reaction center heterodimer binds P680, the primary electron donor of PSII as well as several subsequent electron acceptors. D2 is needed for assembly of a stable PSII complex. The polypeptide is Photosystem II D2 protein (Prochlorococcus marinus (strain MIT 9313)).